Reading from the N-terminus, the 308-residue chain is Ornithine carbamoyltransferase (308 aa).

Carbamoyl phosphate-binding positions include 56 to 59, glutamine 83, arginine 107, and 134 to 137; these read STRT and HPCQ. L-ornithine contacts are provided by residues asparagine 165, aspartate 225, and 229 to 230; that span reads SM. Carbamoyl phosphate-binding positions include 266–267 and arginine 294; that span reads CL.

This sequence belongs to the aspartate/ornithine carbamoyltransferase superfamily. OTCase family.

The protein resides in the cytoplasm. The catalysed reaction is carbamoyl phosphate + L-ornithine = L-citrulline + phosphate + H(+). It functions in the pathway amino-acid biosynthesis; L-arginine biosynthesis; L-arginine from L-ornithine and carbamoyl phosphate: step 1/3. In terms of biological role, reversibly catalyzes the transfer of the carbamoyl group from carbamoyl phosphate (CP) to the N(epsilon) atom of ornithine (ORN) to produce L-citrulline. This Paracoccus denitrificans (strain Pd 1222) protein is Ornithine carbamoyltransferase.